The chain runs to 226 residues: uncharacterized protein (226 aa).

The region spanning glutamate 71–serine 207 is the RNase H type-1 domain.

This is an uncharacterized protein from Bacillus subtilis (strain 168).